Reading from the N-terminus, the 1363-residue chain is DNA-directed RNA polymerase subunit beta (1363 aa).

It belongs to the RNA polymerase beta chain family. In terms of assembly, the RNAP catalytic core consists of 2 alpha, 1 beta, 1 beta' and 1 omega subunit. When a sigma factor is associated with the core the holoenzyme is formed, which can initiate transcription.

It carries out the reaction RNA(n) + a ribonucleoside 5'-triphosphate = RNA(n+1) + diphosphate. DNA-dependent RNA polymerase catalyzes the transcription of DNA into RNA using the four ribonucleoside triphosphates as substrates. In Pelagibacter ubique (strain HTCC1062), this protein is DNA-directed RNA polymerase subunit beta.